Here is a 290-residue protein sequence, read N- to C-terminus: 4-hydroxy-3-methylbut-2-enyl diphosphate reductase (290 aa).

Cys-13 lines the [4Fe-4S] cluster pocket. Positions 41 and 75 each coordinate (2E)-4-hydroxy-3-methylbut-2-enyl diphosphate. Dimethylallyl diphosphate contacts are provided by His-41 and His-75. His-41 and His-75 together coordinate isopentenyl diphosphate. Residue Cys-97 coordinates [4Fe-4S] cluster. His-129 serves as a coordination point for (2E)-4-hydroxy-3-methylbut-2-enyl diphosphate. A dimethylallyl diphosphate-binding site is contributed by His-129. His-129 contributes to the isopentenyl diphosphate binding site. The active-site Proton donor is Glu-131. Thr-167 is a (2E)-4-hydroxy-3-methylbut-2-enyl diphosphate binding site. Cys-198 is a [4Fe-4S] cluster binding site. Residues Ser-226, Ser-227, Asn-228, and Ser-270 each coordinate (2E)-4-hydroxy-3-methylbut-2-enyl diphosphate. Dimethylallyl diphosphate-binding residues include Ser-226, Ser-227, Asn-228, and Ser-270. Residues Ser-226, Ser-227, Asn-228, and Ser-270 each contribute to the isopentenyl diphosphate site.

Belongs to the IspH family. It depends on [4Fe-4S] cluster as a cofactor.

It catalyses the reaction isopentenyl diphosphate + 2 oxidized [2Fe-2S]-[ferredoxin] + H2O = (2E)-4-hydroxy-3-methylbut-2-enyl diphosphate + 2 reduced [2Fe-2S]-[ferredoxin] + 2 H(+). It carries out the reaction dimethylallyl diphosphate + 2 oxidized [2Fe-2S]-[ferredoxin] + H2O = (2E)-4-hydroxy-3-methylbut-2-enyl diphosphate + 2 reduced [2Fe-2S]-[ferredoxin] + 2 H(+). It participates in isoprenoid biosynthesis; dimethylallyl diphosphate biosynthesis; dimethylallyl diphosphate from (2E)-4-hydroxy-3-methylbutenyl diphosphate: step 1/1. The protein operates within isoprenoid biosynthesis; isopentenyl diphosphate biosynthesis via DXP pathway; isopentenyl diphosphate from 1-deoxy-D-xylulose 5-phosphate: step 6/6. In terms of biological role, catalyzes the conversion of 1-hydroxy-2-methyl-2-(E)-butenyl 4-diphosphate (HMBPP) into a mixture of isopentenyl diphosphate (IPP) and dimethylallyl diphosphate (DMAPP). Acts in the terminal step of the DOXP/MEP pathway for isoprenoid precursor biosynthesis. In Bacteroides fragilis (strain ATCC 25285 / DSM 2151 / CCUG 4856 / JCM 11019 / LMG 10263 / NCTC 9343 / Onslow / VPI 2553 / EN-2), this protein is 4-hydroxy-3-methylbut-2-enyl diphosphate reductase.